The following is a 410-amino-acid chain: ATP phosphoribosyltransferase regulatory subunit (410 aa).

Belongs to the class-II aminoacyl-tRNA synthetase family. HisZ subfamily. In terms of assembly, heteromultimer composed of HisG and HisZ subunits.

The protein resides in the cytoplasm. Its pathway is amino-acid biosynthesis; L-histidine biosynthesis; L-histidine from 5-phospho-alpha-D-ribose 1-diphosphate: step 1/9. Required for the first step of histidine biosynthesis. May allow the feedback regulation of ATP phosphoribosyltransferase activity by histidine. The chain is ATP phosphoribosyltransferase regulatory subunit from Synechococcus sp. (strain JA-3-3Ab) (Cyanobacteria bacterium Yellowstone A-Prime).